Reading from the N-terminus, the 719-residue chain is UvrABC system protein B (719 aa).

The Helicase ATP-binding domain occupies R49 to I435. G62–S69 is an ATP binding site. The Beta-hairpin signature appears at Y115 to I138. The 154-residue stretch at Q453–I606 folds into the Helicase C-terminal domain. A disordered region spans residues G635–A654. Residues A674–E709 form the UVR domain.

It belongs to the UvrB family. As to quaternary structure, forms a heterotetramer with UvrA during the search for lesions. Interacts with UvrC in an incision complex.

The protein resides in the cytoplasm. Its function is as follows. The UvrABC repair system catalyzes the recognition and processing of DNA lesions. A damage recognition complex composed of 2 UvrA and 2 UvrB subunits scans DNA for abnormalities. Upon binding of the UvrA(2)B(2) complex to a putative damaged site, the DNA wraps around one UvrB monomer. DNA wrap is dependent on ATP binding by UvrB and probably causes local melting of the DNA helix, facilitating insertion of UvrB beta-hairpin between the DNA strands. Then UvrB probes one DNA strand for the presence of a lesion. If a lesion is found the UvrA subunits dissociate and the UvrB-DNA preincision complex is formed. This complex is subsequently bound by UvrC and the second UvrB is released. If no lesion is found, the DNA wraps around the other UvrB subunit that will check the other stand for damage. This chain is UvrABC system protein B, found in Mycobacterium tuberculosis (strain CDC 1551 / Oshkosh).